The sequence spans 466 residues: uncharacterized protein (466 aa).

Positions 178 to 466 constitute an Autotransporter domain; sequence SQGSASSMWM…QGMLGVKYSW (289 aa).

This is an uncharacterized protein from Escherichia coli (strain K12).